The following is a 455-amino-acid chain: tRNA modification GTPase MnmE (455 aa).

(6S)-5-formyl-5,6,7,8-tetrahydrofolate is bound at residue Arg-22. Positions 43 to 67 (RRATRAALRSPPSGPGPTGPGPEEG) are disordered. (6S)-5-formyl-5,6,7,8-tetrahydrofolate is bound by residues Glu-92 and Arg-132. The TrmE-type G domain occupies 228-381 (GLQVAVVGAP…LEAALESRAR (154 aa)). K(+) is bound at residue Asn-238. GTP contacts are provided by residues 238-243 (NVGKSS), 257-263 (SDIAGTT), and 282-285 (DTAG). Ser-242 contributes to the Mg(2+) binding site. K(+)-binding residues include Ser-257, Ile-259, and Thr-262. Thr-263 is a Mg(2+) binding site. Lys-455 serves as a coordination point for (6S)-5-formyl-5,6,7,8-tetrahydrofolate.

It belongs to the TRAFAC class TrmE-Era-EngA-EngB-Septin-like GTPase superfamily. TrmE GTPase family. In terms of assembly, homodimer. Heterotetramer of two MnmE and two MnmG subunits. It depends on K(+) as a cofactor.

It is found in the cytoplasm. In terms of biological role, exhibits a very high intrinsic GTPase hydrolysis rate. Involved in the addition of a carboxymethylaminomethyl (cmnm) group at the wobble position (U34) of certain tRNAs, forming tRNA-cmnm(5)s(2)U34. The polypeptide is tRNA modification GTPase MnmE (Rhodospirillum rubrum (strain ATCC 11170 / ATH 1.1.1 / DSM 467 / LMG 4362 / NCIMB 8255 / S1)).